The chain runs to 311 residues: Aspartate carbamoyltransferase catalytic subunit (311 aa).

Residues R55 and T56 each coordinate carbamoyl phosphate. K85 contributes to the L-aspartate binding site. Residues R106, H135, and Q138 each coordinate carbamoyl phosphate. Residues R168 and R230 each coordinate L-aspartate. Carbamoyl phosphate contacts are provided by L268 and P269.

It belongs to the aspartate/ornithine carbamoyltransferase superfamily. ATCase family. In terms of assembly, heterododecamer (2C3:3R2) of six catalytic PyrB chains organized as two trimers (C3), and six regulatory PyrI chains organized as three dimers (R2).

The enzyme catalyses carbamoyl phosphate + L-aspartate = N-carbamoyl-L-aspartate + phosphate + H(+). It functions in the pathway pyrimidine metabolism; UMP biosynthesis via de novo pathway; (S)-dihydroorotate from bicarbonate: step 2/3. Functionally, catalyzes the condensation of carbamoyl phosphate and aspartate to form carbamoyl aspartate and inorganic phosphate, the committed step in the de novo pyrimidine nucleotide biosynthesis pathway. The sequence is that of Aspartate carbamoyltransferase catalytic subunit from Citrobacter koseri (strain ATCC BAA-895 / CDC 4225-83 / SGSC4696).